Consider the following 254-residue polypeptide: GPI alpha-1,4-mannosyltransferase I, stabilizing subunit (254 aa).

The N-terminal stretch at Met-1–Ala-22 is a signal peptide. At Asp-23–Leu-226 the chain is on the lumenal side. Asn-211 carries an N-linked (GlcNAc...) asparagine glycan. A helical transmembrane segment spans residues Val-227 to Phe-247. Topologically, residues Lys-248–Leu-254 are cytoplasmic.

This sequence belongs to the PIGX family. Part of the glycosylphosphatidylinositol-mannosyltransferase I complex that is composed of PIGM and PIGX. Interacts with PIGM; PIGX stabilizes PIGM.

The protein resides in the endoplasmic reticulum membrane. It functions in the pathway glycolipid biosynthesis; glycosylphosphatidylinositol-anchor biosynthesis. Functionally, stabilizing subunit of the glycosylphosphatidylinositol-mannosyltransferase I complex which catalyzes the transfer of the first mannose, via an alpha-1,4 bond from a dolichol-phosphate-mannose (Dol-P-Man) to the glucosaminyl acyl phosphatidylinositol (GlcN-(acyl)PI) intermediate to generate alpha-D-Man-(1-&gt;4)-alpha-D-GlcN-(1-&gt;6)-(1-radyl,2-acyl-sn-glycero-3-phospho)-2-acyl-inositol and participates in the sixth step of the glycosylphosphatidylinositol-anchor biosynthesis. Probably acts by stabilizing the mannosyltransferase PIGM. The protein is GPI alpha-1,4-mannosyltransferase I, stabilizing subunit of Mus musculus (Mouse).